The chain runs to 847 residues: Alanine--tRNA ligase (847 aa).

4 residues coordinate Zn(2+): H554, H558, C656, and H660.

It belongs to the class-II aminoacyl-tRNA synthetase family. It depends on Zn(2+) as a cofactor.

Its subcellular location is the cytoplasm. It catalyses the reaction tRNA(Ala) + L-alanine + ATP = L-alanyl-tRNA(Ala) + AMP + diphosphate. Functionally, catalyzes the attachment of alanine to tRNA(Ala) in a two-step reaction: alanine is first activated by ATP to form Ala-AMP and then transferred to the acceptor end of tRNA(Ala). Also edits incorrectly charged Ser-tRNA(Ala) and Gly-tRNA(Ala) via its editing domain. The polypeptide is Alanine--tRNA ligase (Helicobacter pylori (strain Shi470)).